A 377-amino-acid chain; its full sequence is Caspase-4 (377 aa).

Positions 1-59 (MAEDKHNKNPLKMLESLGKELISGLLDDFVEKNVLKLEEEEKKKIYDAKLQDKARVLVD) are required for LPS-binding. The propeptide occupies 1-80 (MAEDKHNKNP…VFVQTFLNID (80 aa)). One can recognise a CARD domain in the interval 1 to 91 (MAEDKHNKNP…NSTSIKAPEE (91 aa)). Position 83 is a phosphoserine (serine 83). Active-site residues include histidine 210 and cysteine 258. The propeptide occupies 271–289 (SPPALADSFSQSSENLEED).

This sequence belongs to the peptidase C14A family. Heterotetramer that consists of two anti-parallel arranged heterodimers, each one formed by a 20 kDa (Caspase-4 subunit p20) and a 10 kDa (Caspase-4 subunit p10) subunit. Upon direct LPS-binding, forms large homooligomers, resulting in its activation. These oligomers are often referred to as 'non-canonical inflammasomes'. In its precursor form, interacts with TMEM214; this interaction is required for association with the endoplasmic reticulum membrane. Interacts with CASP1. Interacts with NOD2. Interacts with Serpinb1a, Serpinb1b and Serpinb1c; these interactions regulate CASP4 activity. In terms of assembly, heterotetramer that consists of two anti-parallel arranged heterodimers, each one formed by a 20 kDa (Caspase-4 subunit p20) and a 10 kDa (Caspase-4 subunit p10) subunit. In terms of processing, in response to activation signals, undergoes autoproteolytic cleavage and activation.

It localises to the cytoplasm. The protein resides in the cytosol. The protein localises to the endoplasmic reticulum membrane. It is found in the mitochondrion. Its subcellular location is the inflammasome. It localises to the secreted. The enzyme catalyses Strict requirement for Asp at the P1 position. It has a preferred cleavage sequence of Tyr-Val-Ala-Asp-|- but also cleaves at Asp-Glu-Val-Asp-|-.. With respect to regulation, activated by homooligomerization induced by direct binding to cytosolic LPS, in a TLR4-independent manner. In addition to LPS, CASP4/CASP11 may also be activated by oxidized phospholipid 1-palmitoyl-2-arachidonoyl- sn-glycero-3-phosphorylcholine, an oxidized phospholipid (oxPAPC), in dendritic cells, promoting adaptive immunity. The role of oxPAPC is however unclear and another report suggests that oxPAPC competes with LPS-binding and inhibits the non-canonical inflammasome in macrophages. Its function is as follows. Inflammatory caspase that acts as the effector of the non-canonical inflammasome by mediating lipopolysaccharide (LPS)-induced pyroptosis. Also indirectly activates the NLRP3 and NLRP6 inflammasomes. Acts as a thiol protease that cleaves a tetrapeptide after an Asp residue at position P1: catalyzes cleavage of CGAS, GSDMD and IL18. Effector of the non-canonical inflammasome independently of NLRP3 inflammasome and CASP1: the non-canonical inflammasome promotes pyroptosis through GSDMD cleavage without involving secretion of cytokine IL1B. In the non-canonical inflammasome, CASP4 is activated by direct binding to the lipid A moiety of LPS without the need of an upstream sensor. LPS-binding promotes CASP4 activation and CASP4-mediated cleavage of GSDMD and IL18, followed by IL18 secretion through the GSDMD pore, pyroptosis of infected cells and their extrusion into the gut lumen. Also indirectly promotes secretion of mature cytokines (IL1A and HMGB1) downstream of GSDMD-mediated pyroptosis via activation of the NLRP3 and NLRP6 inflammasomes. Involved in NLRP3-dependent CASP1 activation and IL1B secretion in response to non-canonical activators, such as UVB radiation or cholera enterotoxin. Involved in NLRP6 inflammasome-dependent activation in response to lipoteichoic acid (LTA), a cell-wall component of Gram-positive bacteria, which leads to CASP1 activation and IL1B secretion. Involved in LPS-induced IL6 secretion; this activity may not require caspase enzymatic activity. The non-canonical inflammasome is required for innate immunity to cytosolic, but not vacuolar, bacteria. Plays a crucial role in the restriction of S.typhimurium replication in colonic epithelial cells during infection. Pyroptosis limits bacterial replication, while cytokine secretion promotes the recruitment and activation of immune cells and triggers mucosal inflammation. May also act as an activator of adaptive immunity in dendritic cells, following activation by oxidized phospholipid 1-palmitoyl-2-arachidonoyl- sn-glycero-3-phosphorylcholine, an oxidized phospholipid (oxPAPC). Cleavage of GSDMD is not strictly dependent on the consensus cleavage site but depends on an exosite interface on CASP4 that recognizes and binds the Gasdermin-D, C-terminal (GSDMD-CT) part. Catalyzes cleavage and maturation of IL18; IL18 processing also depends of the exosite interface on CASP4. In contrast, it does not directly process IL1B. During non-canonical inflammasome activation, cuts CGAS and may play a role in the regulation of antiviral innate immune activation. The protein is Caspase-4 (CASP4) of Bos taurus (Bovine).